The sequence spans 64 residues: UPF0434 protein Bcep18194_A5877 (64 aa).

It belongs to the UPF0434 family.

This chain is UPF0434 protein Bcep18194_A5877, found in Burkholderia lata (strain ATCC 17760 / DSM 23089 / LMG 22485 / NCIMB 9086 / R18194 / 383).